Here is a 480-residue protein sequence, read N- to C-terminus: Membrane-bound lytic murein transglycosylase F (480 aa).

Positions 1-15 (MKKLLFVLLTITLLA) are cleaved as a signal peptide. Residues 16–259 (SCQKVSVEQT…HLNEKYFAHV (244 aa)) are non-LT domain. The interval 260 to 480 (KRFDYVDTRA…QENLSGAQPQ (221 aa)) is LT domain. The active site involves E304.

It in the N-terminal section; belongs to the bacterial solute-binding protein 3 family. This sequence in the C-terminal section; belongs to the transglycosylase Slt family.

The protein localises to the cell outer membrane. The enzyme catalyses Exolytic cleavage of the (1-&gt;4)-beta-glycosidic linkage between N-acetylmuramic acid (MurNAc) and N-acetylglucosamine (GlcNAc) residues in peptidoglycan, from either the reducing or the non-reducing ends of the peptidoglycan chains, with concomitant formation of a 1,6-anhydrobond in the MurNAc residue.. Its function is as follows. Murein-degrading enzyme that degrades murein glycan strands and insoluble, high-molecular weight murein sacculi, with the concomitant formation of a 1,6-anhydromuramoyl product. Lytic transglycosylases (LTs) play an integral role in the metabolism of the peptidoglycan (PG) sacculus. Their lytic action creates space within the PG sacculus to allow for its expansion as well as for the insertion of various structures such as secretion systems and flagella. This Shewanella sediminis (strain HAW-EB3) protein is Membrane-bound lytic murein transglycosylase F.